Consider the following 878-residue polypeptide: Lon protease 2 (878 aa).

Positions 85-281 constitute a Lon N-terminal domain; sequence LYLLPVKERP…KVLSLFKHEI (197 aa). Residue 434-441 coordinates ATP; the sequence is GPPGVGKT. The Lon proteolytic domain maps to 668-850; that stretch reads NQQMGTVTGL…DDVAKLTFHI (183 aa). Active-site residues include Ser-756 and Lys-799.

This sequence belongs to the peptidase S16 family. Homohexamer. Organized in a ring with a central cavity.

The protein localises to the cytoplasm. The enzyme catalyses Hydrolysis of proteins in presence of ATP.. Functionally, ATP-dependent serine protease that mediates the selective degradation of mutant and abnormal proteins as well as certain short-lived regulatory proteins. Required for cellular homeostasis and for survival from DNA damage and developmental changes induced by stress. Degrades polypeptides processively to yield small peptide fragments that are 5 to 10 amino acids long. Binds to DNA in a double-stranded, site-specific manner. The sequence is that of Lon protease 2 from Hydrogenovibrio crunogenus (strain DSM 25203 / XCL-2) (Thiomicrospira crunogena).